The primary structure comprises 175 residues: Large ribosomal subunit protein uL18 (175 aa).

The protein belongs to the universal ribosomal protein uL18 family. Part of the 50S ribosomal subunit. Contacts the 5S and 23S rRNAs.

This is one of the proteins that bind and probably mediate the attachment of the 5S RNA into the large ribosomal subunit, where it forms part of the central protuberance. The polypeptide is Large ribosomal subunit protein uL18 (Methanospirillum hungatei JF-1 (strain ATCC 27890 / DSM 864 / NBRC 100397 / JF-1)).